A 74-amino-acid chain; its full sequence is MAQSVNIQDQYLNQLRKNHISVTVFLTNGFQLRGLVKAFDNFTVLLETDGKQQLIFKHAISTFSPVKNVSLDKE.

The region spanning 9 to 69 (DQYLNQLRKN…ISTFSPVKNV (61 aa)) is the Sm domain.

It belongs to the Hfq family. In terms of assembly, homohexamer.

RNA chaperone that binds small regulatory RNA (sRNAs) and mRNAs to facilitate mRNA translational regulation in response to envelope stress, environmental stress and changes in metabolite concentrations. Also binds with high specificity to tRNAs. This chain is RNA-binding protein Hfq, found in Oceanobacillus iheyensis (strain DSM 14371 / CIP 107618 / JCM 11309 / KCTC 3954 / HTE831).